Consider the following 244-residue polypeptide: Probable proteasome subunit alpha type-1 (244 aa).

It belongs to the peptidase T1A family. As to quaternary structure, the 26S proteasome consists of a 20S proteasome core and two 19S regulatory subunits. The 20S proteasome core is composed of 28 subunits that are arranged in four stacked rings, resulting in a barrel-shaped structure. The two end rings are each formed by seven alpha subunits, and the two central rings are each formed by seven beta subunits. The catalytic chamber with the active sites is on the inside of the barrel.

The protein resides in the cytoplasm. Its subcellular location is the nucleus. Functionally, the proteasome is a multicatalytic proteinase complex which is characterized by its ability to cleave peptides with Arg, Phe, Tyr, Leu, and Glu adjacent to the leaving group at neutral or slightly basic pH. The proteasome has an ATP-dependent proteolytic activity. This chain is Probable proteasome subunit alpha type-1, found in Schizosaccharomyces pombe (strain 972 / ATCC 24843) (Fission yeast).